The sequence spans 522 residues: Peptide chain release factor 3 (522 aa).

Positions 10 to 277 (ASRKTFAIIS…TFVDFAPAPS (268 aa)) constitute a tr-type G domain. GTP is bound by residues 19-26 (SHPDAGKT), 87-91 (DTPGH), and 141-144 (NKMD).

The protein belongs to the TRAFAC class translation factor GTPase superfamily. Classic translation factor GTPase family. PrfC subfamily.

Its subcellular location is the cytoplasm. Its function is as follows. Increases the formation of ribosomal termination complexes and stimulates activities of RF-1 and RF-2. It binds guanine nucleotides and has strong preference for UGA stop codons. It may interact directly with the ribosome. The stimulation of RF-1 and RF-2 is significantly reduced by GTP and GDP, but not by GMP. The sequence is that of Peptide chain release factor 3 from Listeria monocytogenes serovar 1/2a (strain ATCC BAA-679 / EGD-e).